The primary structure comprises 250 residues: MEMDGDPYNLPAQGQGNIIITKYEQGHRAGAAVDLGHEQVDVRKYTNNLGIVHEMELPHVSALEVKQRRKESKRTNKWQKMLADWTKYRSTKKLSQRVYKVIPLAVRGRAWSLLLDIDRIKSQNPGKYKVMKEKGKRSSRIIHCIQLDVSHTLQKHMMFIQRFGVKQQELCDILVAYSAYNPEVGYHRDLSRITAILLLCLPEEDAFWALTQLLAGERHSLWYSTAQILPGSRGSYRTRSRCCTSPSQRS.

The 150-residue stretch at 101-250 folds into the Rab-GAP TBC domain; it reads VIPLAVRGRA…RCCTSPSQRS (150 aa).

Functionally, may act as a GTPase-activating protein for Rab family protein(s). The polypeptide is TBC1 domain family member 26 (TBC1D26) (Homo sapiens (Human)).